A 310-amino-acid polypeptide reads, in one-letter code: Elongation factor Ts (310 aa).

Residues 80–83 (TDFV) are involved in Mg(2+) ion dislocation from EF-Tu.

The protein belongs to the EF-Ts family.

It localises to the cytoplasm. In terms of biological role, associates with the EF-Tu.GDP complex and induces the exchange of GDP to GTP. It remains bound to the aminoacyl-tRNA.EF-Tu.GTP complex up to the GTP hydrolysis stage on the ribosome. The chain is Elongation factor Ts from Methylocella silvestris (strain DSM 15510 / CIP 108128 / LMG 27833 / NCIMB 13906 / BL2).